The following is a 332-amino-acid chain: Holliday junction branch migration complex subunit RuvB (332 aa).

Residues 1-181 (MSRILDNEMM…FGITGHMEYY (181 aa)) form a large ATPase domain (RuvB-L) region. Residues leucine 20, arginine 21, glycine 62, lysine 65, threonine 66, threonine 67, 128–130 (EDF), arginine 171, tyrosine 181, and arginine 218 each bind ATP. Threonine 66 serves as a coordination point for Mg(2+). The small ATPAse domain (RuvB-S) stretch occupies residues 182-252 (AHADLTEIVE…ITDKALTMLD (71 aa)). The segment at 255–332 (HEGLDYVDQK…EHLGYEYSEK (78 aa)) is head domain (RuvB-H). Positions 291, 310, 312, and 315 each coordinate DNA.

The protein belongs to the RuvB family. As to quaternary structure, homohexamer. Forms an RuvA(8)-RuvB(12)-Holliday junction (HJ) complex. HJ DNA is sandwiched between 2 RuvA tetramers; dsDNA enters through RuvA and exits via RuvB. An RuvB hexamer assembles on each DNA strand where it exits the tetramer. Each RuvB hexamer is contacted by two RuvA subunits (via domain III) on 2 adjacent RuvB subunits; this complex drives branch migration. In the full resolvosome a probable DNA-RuvA(4)-RuvB(12)-RuvC(2) complex forms which resolves the HJ.

Its subcellular location is the cytoplasm. The catalysed reaction is ATP + H2O = ADP + phosphate + H(+). Its function is as follows. The RuvA-RuvB-RuvC complex processes Holliday junction (HJ) DNA during genetic recombination and DNA repair, while the RuvA-RuvB complex plays an important role in the rescue of blocked DNA replication forks via replication fork reversal (RFR). RuvA specifically binds to HJ cruciform DNA, conferring on it an open structure. The RuvB hexamer acts as an ATP-dependent pump, pulling dsDNA into and through the RuvAB complex. RuvB forms 2 homohexamers on either side of HJ DNA bound by 1 or 2 RuvA tetramers; 4 subunits per hexamer contact DNA at a time. Coordinated motions by a converter formed by DNA-disengaged RuvB subunits stimulates ATP hydrolysis and nucleotide exchange. Immobilization of the converter enables RuvB to convert the ATP-contained energy into a lever motion, pulling 2 nucleotides of DNA out of the RuvA tetramer per ATP hydrolyzed, thus driving DNA branch migration. The RuvB motors rotate together with the DNA substrate, which together with the progressing nucleotide cycle form the mechanistic basis for DNA recombination by continuous HJ branch migration. Branch migration allows RuvC to scan DNA until it finds its consensus sequence, where it cleaves and resolves cruciform DNA. The polypeptide is Holliday junction branch migration complex subunit RuvB (Streptococcus pneumoniae serotype 4 (strain ATCC BAA-334 / TIGR4)).